Here is a 372-residue protein sequence, read N- to C-terminus: Glutamate 5-kinase (372 aa).

An ATP-binding site is contributed by Lys14. Substrate-binding residues include Ser54, Asp141, and Asn153. 173-174 provides a ligand contact to ATP; sequence TD. Residues 280-358 form the PUA domain; sequence RGTLVLDDGA…DAIEALLGYV (79 aa).

This sequence belongs to the glutamate 5-kinase family.

The protein localises to the cytoplasm. It catalyses the reaction L-glutamate + ATP = L-glutamyl 5-phosphate + ADP. It functions in the pathway amino-acid biosynthesis; L-proline biosynthesis; L-glutamate 5-semialdehyde from L-glutamate: step 1/2. In terms of biological role, catalyzes the transfer of a phosphate group to glutamate to form L-glutamate 5-phosphate. This chain is Glutamate 5-kinase, found in Pseudomonas aeruginosa (strain UCBPP-PA14).